A 155-amino-acid chain; its full sequence is Small ribosomal subunit protein uS7c (155 aa).

This sequence belongs to the universal ribosomal protein uS7 family. As to quaternary structure, part of the 30S ribosomal subunit.

The protein resides in the plastid. The protein localises to the chloroplast. In terms of biological role, one of the primary rRNA binding proteins, it binds directly to 16S rRNA where it nucleates assembly of the head domain of the 30S subunit. The polypeptide is Small ribosomal subunit protein uS7c (rps7) (Dioscorea bulbifera (Air potato)).